The sequence spans 545 residues: Chaperonin GroEL 2 (545 aa).

ATP contacts are provided by residues 30 to 33 (TLGP), Lys51, 87 to 91 (DGTTT), Gly415, 479 to 481 (NAA), and Asp495.

The protein belongs to the chaperonin (HSP60) family. As to quaternary structure, forms a cylinder of 14 subunits composed of two heptameric rings stacked back-to-back. Interacts with the co-chaperonin GroES.

Its subcellular location is the cytoplasm. The catalysed reaction is ATP + H2O + a folded polypeptide = ADP + phosphate + an unfolded polypeptide.. Together with its co-chaperonin GroES, plays an essential role in assisting protein folding. The GroEL-GroES system forms a nano-cage that allows encapsulation of the non-native substrate proteins and provides a physical environment optimized to promote and accelerate protein folding. In Escherichia coli O1:K1 / APEC, this protein is Chaperonin GroEL 2.